Here is a 462-residue protein sequence, read N- to C-terminus: tRNA pseudouridine(32) synthase, mitochondrial (462 aa).

Residues 1–24 (MQRNNRLRNLFTVPVIMARQLKRN) constitute a mitochondrion transit peptide. The S4 RNA-binding domain maps to 127-188 (KLVDVFISEF…HEPPVTSRPI (62 aa)). The active site involves D238.

It belongs to the pseudouridine synthase RluA family.

It is found in the mitochondrion. The catalysed reaction is uridine(32) in tRNA = pseudouridine(32) in tRNA. Its function is as follows. Responsible for synthesis of pseudouridine from uracil-32 in mitochondrial transfer RNAs. The chain is tRNA pseudouridine(32) synthase, mitochondrial (PUS9) from Saccharomyces cerevisiae (strain ATCC 204508 / S288c) (Baker's yeast).